The sequence spans 467 residues: Mitochondrial distribution and morphology protein 10 (467 aa).

The disordered stretch occupies residues 361 to 393 (GLPDTAPSRNRECDDLPPPRRDNYHHQRSPHAS). Residues 369–385 (RNRECDDLPPPRRDNYH) are compositionally biased toward basic and acidic residues.

Belongs to the MDM10 family. Component of the ER-mitochondria encounter structure (ERMES) or MDM complex, composed of MMM1, MDM10, MDM12 and MDM34. Associates with the mitochondrial outer membrane sorting assembly machinery SAM(core) complex.

The protein localises to the mitochondrion outer membrane. In terms of biological role, component of the ERMES/MDM complex, which serves as a molecular tether to connect the endoplasmic reticulum and mitochondria. Components of this complex are involved in the control of mitochondrial shape and protein biogenesis and may function in phospholipid exchange. MDM10 is involved in the late assembly steps of the general translocase of the mitochondrial outer membrane (TOM complex). Functions in the TOM40-specific route of the assembly of outer membrane beta-barrel proteins, including the association of TOM40 with the receptor TOM22 and small TOM proteins. Can associate with the SAM(core) complex as well as the MDM12-MMM1 complex, both involved in late steps of the major beta-barrel assembly pathway, that is responsible for biogenesis of all outer membrane beta-barrel proteins. May act as a switch that shuttles between both complexes and channels precursor proteins into the TOM40-specific pathway. Plays a role in mitochondrial morphology and in the inheritance of mitochondria. This Ajellomyces capsulatus (strain NAm1 / WU24) (Darling's disease fungus) protein is Mitochondrial distribution and morphology protein 10.